A 547-amino-acid chain; its full sequence is Smu-2 suppressor of mec-8 and unc-52 protein (547 aa).

Disordered stretches follow at residues 18–125 (TSAR…AQDQ), 164–202 (IDKSDDDDDDDIDTAFDEKVTSSSSSSKPSEASLLAQEL), 288–459 (AEPK…AGPK), 496–515 (NGEGGRKNKKQSAVSDAKRL), and 524–547 (KIMDKRKAGGDGAGGGGDYKKPKY). Residues 34-44 (ADPKTGDDKPA) are compositionally biased toward basic and acidic residues. Over residues 45-58 (SFKHKHLKPAKFKK) the composition is skewed to basic residues. Residues 66–94 (KAKKEKTEADEDEAALKNILKNYRDRAAE) adopt a coiled-coil conformation. Basic and acidic residues predominate over residues 87–106 (NYRDRAAERRKQGDEKEDPS). The tract at residues 163–223 (EIDKSDDDDD…SLHRVLFKNE (61 aa)) is required and sufficient for interaction with smu-1. A compositionally biased stretch (acidic residues) spans 166–178 (KSDDDDDDDIDTA). Low complexity-rich tracts occupy residues 185 to 196 (SSSSSSKPSEAS) and 307 to 317 (APGAAAAAPGA). The segment covering 330-423 (VPSRKSRDSR…EREKKRKELE (94 aa)) has biased composition (basic and acidic residues). 12 consecutive repeat copies span residues 336–337 (RD), 339–340 (RD), 348–349 (RD), 350–351 (RS), 352–353 (RD), 354–355 (RS), 356–357 (RD), 358–359 (RD), 360–361 (RD), 362–363 (RD), 364–365 (RD), and 367–368 (RD). The tract at residues 336–368 (RDSRDAGRRGSRRDRSRDRSRDRDRDRDRDNRD) is 12 X 2 AA repeats of R-[DS]. The stretch at 371–427 (FEKSANSRREEEQNRREQQRERERAEQERRREREKEREQEKAKEREKKRKELEESSG) forms a coiled coil.

This sequence belongs to the RED family. Probable component of the spliceosome. Heterotetramer with smu-1. The smu-1 homodimer interacts (via the N-terminal region including the LisH and CTLH domains) with smu-2, giving rise to a heterotetramer. Ubiquitous.

It is found in the nucleus. Its function is as follows. Auxiliary spliceosomal protein that regulates selection of alternative splice sites in a small set of target pre-mRNA species. Selectively regulates alternative splicing of unc-52 exon 17. Thus, smu-2 mutants selectively suppress the effects of unc-52 nonsense mutations in exon 17 by promoting the accumulation of unc-52 isoforms that lack exon 17. In contrast, smu-2 mutants do not suppress the effects of an unc-52 mutation that affects the 5' splice site of exon 16. Required for normal accumulation of smu-1. The sequence is that of Smu-2 suppressor of mec-8 and unc-52 protein from Caenorhabditis elegans.